The chain runs to 351 residues: UDP-N-acetylglucosamine--N-acetylmuramyl-(pentapeptide) pyrophosphoryl-undecaprenol N-acetylglucosamine transferase (351 aa).

UDP-N-acetyl-alpha-D-glucosamine is bound by residues 13–15 (TGG), Asn-125, Arg-161, Ser-189, Ile-241, 260–265 (ALTVCE), and Gln-285.

Belongs to the glycosyltransferase 28 family. MurG subfamily.

It is found in the cell inner membrane. The enzyme catalyses di-trans,octa-cis-undecaprenyl diphospho-N-acetyl-alpha-D-muramoyl-L-alanyl-D-glutamyl-meso-2,6-diaminopimeloyl-D-alanyl-D-alanine + UDP-N-acetyl-alpha-D-glucosamine = di-trans,octa-cis-undecaprenyl diphospho-[N-acetyl-alpha-D-glucosaminyl-(1-&gt;4)]-N-acetyl-alpha-D-muramoyl-L-alanyl-D-glutamyl-meso-2,6-diaminopimeloyl-D-alanyl-D-alanine + UDP + H(+). The protein operates within cell wall biogenesis; peptidoglycan biosynthesis. In terms of biological role, cell wall formation. Catalyzes the transfer of a GlcNAc subunit on undecaprenyl-pyrophosphoryl-MurNAc-pentapeptide (lipid intermediate I) to form undecaprenyl-pyrophosphoryl-MurNAc-(pentapeptide)GlcNAc (lipid intermediate II). The protein is UDP-N-acetylglucosamine--N-acetylmuramyl-(pentapeptide) pyrophosphoryl-undecaprenol N-acetylglucosamine transferase of Haemophilus influenzae (strain PittEE).